A 174-amino-acid chain; its full sequence is uncharacterized protein (174 aa).

The helical transmembrane segment at 7-24 threads the bilayer; it reads LLLLAFAVCLAVGFSGCL.

The protein resides in the membrane. This is an uncharacterized protein from Methanocaldococcus jannaschii (strain ATCC 43067 / DSM 2661 / JAL-1 / JCM 10045 / NBRC 100440) (Methanococcus jannaschii).